Reading from the N-terminus, the 229-residue chain is Potassium/proton antiporter CemA (229 aa).

The next 3 helical transmembrane spans lie at 6-26 (AFIP…ISLC), 107-127 (ILHF…SFWG), and 189-209 (ILSG…KYWI).

The protein belongs to the CemA family.

The protein localises to the plastid. It is found in the chloroplast inner membrane. The enzyme catalyses K(+)(in) + H(+)(out) = K(+)(out) + H(+)(in). In terms of biological role, contributes to K(+)/H(+) antiport activity by supporting proton efflux to control proton extrusion and homeostasis in chloroplasts in a light-dependent manner to modulate photosynthesis. Prevents excessive induction of non-photochemical quenching (NPQ) under continuous-light conditions. Indirectly promotes efficient inorganic carbon uptake into chloroplasts. The sequence is that of Potassium/proton antiporter CemA from Nasturtium officinale (Watercress).